The chain runs to 533 residues: T-complex protein 1 subunit delta (533 aa).

Polar residues predominate over residues 1-15; that stretch reads MAQSQVGKGSPSNAT. A disordered region spans residues 1–25; that stretch reads MAQSQVGKGSPSNATFRDKEKPQEV. The segment covering 16–25 has biased composition (basic and acidic residues); that stretch reads FRDKEKPQEV.

This sequence belongs to the TCP-1 chaperonin family. In terms of assembly, heterooligomeric complex of about 850 to 900 kDa that forms two stacked rings, 12 to 16 nm in diameter.

The protein localises to the cytoplasm. Functionally, molecular chaperone; assists the folding of proteins upon ATP hydrolysis. Known to play a role, in vitro, in the folding of actin and tubulin. This chain is T-complex protein 1 subunit delta (CCT4), found in Debaryomyces hansenii (strain ATCC 36239 / CBS 767 / BCRC 21394 / JCM 1990 / NBRC 0083 / IGC 2968) (Yeast).